The following is a 117-amino-acid chain: MTRVKRGYTARRRRKKIRLFASTFIGAHSRLTRTTTQQRMRALISSHRDRSRKKRDFRRLWITRINAVTREDRLFYSYSLFIHNLYKRQLLLNRKILAQIALSNKNCFDIISNKIIN.

This sequence belongs to the bacterial ribosomal protein bL20 family.

The protein localises to the plastid. It is found in the chloroplast. Its function is as follows. Binds directly to 23S ribosomal RNA and is necessary for the in vitro assembly process of the 50S ribosomal subunit. It is not involved in the protein synthesizing functions of that subunit. This is Large ribosomal subunit protein bL20c from Phalaenopsis aphrodite subsp. formosana (Moth orchid).